The chain runs to 347 residues: NADH-quinone oxidoreductase subunit H (347 aa).

The next 9 membrane-spanning stretches (helical) occupy residues 13-33, 50-70, 82-102, 115-135, 161-181, 198-218, 263-283, 286-306, and 321-341; these read IIMIGQSLLLLVCLLVFIAYV, PNVVGPFGLFQSFADLLKFVF, AVFLLAPLVTVLLALSTWAVV, VGILYIFAISSLEVYGIIMGG, IGFVIVTVLLCVGSLNLTDIV, FLDWHWLSLFPMFIIFFISAL, CALTTILFLGGWLPPVDIWIL, VPGIIWFTLKACFVFFMFAMV, and LGWKVFLPLSLAMVVIVAFVL.

The protein belongs to the complex I subunit 1 family. In terms of assembly, NDH-1 is composed of 14 different subunits. Subunits NuoA, H, J, K, L, M, N constitute the membrane sector of the complex.

Its subcellular location is the cell inner membrane. The enzyme catalyses a quinone + NADH + 5 H(+)(in) = a quinol + NAD(+) + 4 H(+)(out). In terms of biological role, NDH-1 shuttles electrons from NADH, via FMN and iron-sulfur (Fe-S) centers, to quinones in the respiratory chain. The immediate electron acceptor for the enzyme in this species is believed to be ubiquinone. Couples the redox reaction to proton translocation (for every two electrons transferred, four hydrogen ions are translocated across the cytoplasmic membrane), and thus conserves the redox energy in a proton gradient. This subunit may bind ubiquinone. This is NADH-quinone oxidoreductase subunit H from Rhizobium johnstonii (strain DSM 114642 / LMG 32736 / 3841) (Rhizobium leguminosarum bv. viciae).